The primary structure comprises 340 residues: UPF0324 membrane protein OB3406 (340 aa).

9 helical membrane-spanning segments follow: residues 12–31 (SFYT…GVLC), 36–58 (LDIM…TIGL), 94–116 (GLHA…YSLA), 126–148 (SILT…APLV), 155–177 (TAVS…TMMY), 215–237 (IAIV…IGIY), 257–276 (IPWF…IGFL), 281–303 (VNLL…GLNV), and 315–337 (VFFA…IYVM).

Belongs to the UPF0324 family.

It is found in the cell membrane. The protein is UPF0324 membrane protein OB3406 of Oceanobacillus iheyensis (strain DSM 14371 / CIP 107618 / JCM 11309 / KCTC 3954 / HTE831).